The sequence spans 137 residues: Global transcriptional regulator Spx (137 aa).

A disulfide bridge links cysteine 10 with cysteine 13.

The protein belongs to the ArsC family. Spx subfamily. As to quaternary structure, interacts with the C-terminal domain of the alpha subunit of the RNAP.

The protein resides in the cytoplasm. Global transcriptional regulator that plays a key role in stress response and exerts either positive or negative regulation of genes. Acts by interacting with the C-terminal domain of the alpha subunit of the RNA polymerase (RNAP). This interaction can enhance binding of RNAP to the promoter region of target genes and stimulate their transcription, or block interaction of RNAP with activator. The sequence is that of Global transcriptional regulator Spx from Streptococcus agalactiae serotype III (strain NEM316).